The primary structure comprises 604 residues: Serine/threonine-protein kinase A-Raf (604 aa).

The RBD domain occupies 19-91 (GTVKVYLPNK…DGEELIVEVL (73 aa)). The Phorbol-ester/DAG-type zinc finger occupies 98-144 (MHNFVRKTFFSLAFCDFCLKFLFHGFRCQTCGYKFHQHCSSKVPTVC). His99, Cys112, Cys115, Cys125, Cys128, His133, Cys136, and Cys144 together coordinate Zn(2+). Phosphoserine is present on residues Ser157 and Ser162. Disordered regions lie at residues 178–222 (ELLT…HMVS) and 241–287 (TDAA…DEKK). Thr181 is modified (phosphothreonine). Residue Ser186 is modified to Phosphoserine. The segment covering 210 to 222 (IRSTSTPNVHMVS) has biased composition (polar residues). Positions 252-265 (PRGSPSPASVSSGR) are enriched in low complexity. Residues Ser255 and Ser267 each carry the phosphoserine modification. Basic and acidic residues predominate over residues 272–287 (LPAEQRERKSLADEKK). Positions 308–568 (VQLLKRIGTG…PQILATIELL (261 aa)) constitute a Protein kinase domain. Residues 314-322 (IGTGSFGTV) and Lys334 each bind ATP. Thr316 is subject to Phosphothreonine. Asp427 functions as the Proton acceptor in the catalytic mechanism.

Belongs to the protein kinase superfamily. TKL Ser/Thr protein kinase family. RAF subfamily. Interacts with TH1L/NELFD. It depends on Zn(2+) as a cofactor. Dephosphorylation by the SHOC2-MRAS-PP1c (SMP) complex consisting of SHOC2, GTP-bound M-Ras/MRAS and the catalytic subunit of protein phosphatase 1 (PPP1CA, PPP1CB or PPP1CC); this relieves inactivation and stimulates kinase activity.

The enzyme catalyses L-seryl-[protein] + ATP = O-phospho-L-seryl-[protein] + ADP + H(+). The catalysed reaction is L-threonyl-[protein] + ATP = O-phospho-L-threonyl-[protein] + ADP + H(+). In terms of biological role, involved in the transduction of mitogenic signals from the cell membrane to the nucleus. May also regulate the TOR signaling cascade. Phosphorylates PFKFB2. This Rattus norvegicus (Rat) protein is Serine/threonine-protein kinase A-Raf (Araf).